Consider the following 481-residue polypeptide: 3-isopropylmalate dehydratase large subunit (481 aa).

Residues Cys-363, Cys-423, and Cys-426 each contribute to the [4Fe-4S] cluster site. A disordered region spans residues 437-463 (GQRAASTSNRNFEGRQGRGGRTHLVSP).

It belongs to the aconitase/IPM isomerase family. LeuC type 1 subfamily. In terms of assembly, heterodimer of LeuC and LeuD. The cofactor is [4Fe-4S] cluster.

It carries out the reaction (2R,3S)-3-isopropylmalate = (2S)-2-isopropylmalate. It functions in the pathway amino-acid biosynthesis; L-leucine biosynthesis; L-leucine from 3-methyl-2-oxobutanoate: step 2/4. Catalyzes the isomerization between 2-isopropylmalate and 3-isopropylmalate, via the formation of 2-isopropylmaleate. This is 3-isopropylmalate dehydratase large subunit from Salinispora arenicola (strain CNS-205).